The primary structure comprises 219 residues: Transmembrane emp24 domain-containing protein 10 (219 aa).

A signal peptide spans 1–31 (MSGSSGPLSWPGPRPCALLFLLLLGPSSVLA). The tract at residues 1–142 (MSGSSGPLSW…KNYEEIAKVE (142 aa)) is required for interaction with STX17. At 32-185 (ISFHLPVNSR…RDTNESTNTR (154 aa)) the chain is on the lumenal side. In terms of domain architecture, GOLD spans 41–193 (RKCLREEIHK…TRVLYFSIFS (153 aa)). Residues 147–178 (LEVELRRLEDLSESIVNDFAYMKKREEEMRDT) are required for TMED10 and TMED2 cis-Golgi network localization. 2 positions are modified to dimethylated arginine: R171 and R176. An N-linked (GlcNAc...) asparagine glycan is attached at N179. A helical transmembrane segment spans residues 186-206 (VLYFSIFSMLCLIGLATWQVF). An interaction with COPG1 region spans residues 204–219 (QVFYLRRFFKAKKLIE). At 207–219 (YLRRFFKAKKLIE) the chain is on the cytoplasmic side. The tract at residues 207–219 (YLRRFFKAKKLIE) is interaction with ARF1 and IL1B. The short motif at 211-212 (FF) is the COPII vesicle coat-binding element. The COPI vesicle coat-binding signature appears at 211–219 (FFKAKKLIE).

The protein belongs to the EMP24/GP25L family. As to quaternary structure, predominantly dimeric and to a lesser extent monomeric in the ER. Monomer and dimer in ERGIC and cis-Golgi network. Forms homooligomer (via GOLD domain); the assembly is promoted by direct binding with leaderless cargos and may form a protein channel that facilitates cargo entry into the ERGIC. Forms heterooligomeric complexes with other members of the p24 family such as TMED2, TMED7 and TMED9. Interacts (via GOLD domain) with TMED2 (via GOLD domain); the complex is required for export of TMED10 from the ER to the cis-Golgi network; the complex is proposed to be involved in cis-Golgi network dynamics and / or biogenesis. Associates with the COPI vesicle coat subunits (coatomer). Tetramerization of the cytoplasmic domain at the Golgi membrane in vitro; the complex is proposed to interact with COPI coatomer and induce budding of the vesicles. Interacts with COPG1; the interaction involves TMED10 homodimer. Interacts with ARF1 (GDP-bound); the interaction probably involves a TMED10 oligomer. Interacts with SEC23A, SEC24B, SEC24C and SEC24D components of the coat protein complex II/COPII, indicative of an association of TMED10 with the COPII vesicle coat. Interacts with CD59. Interacts with MPPE1/PGAP5; the complex might recruit and sort GPI-anchored proteins to the ER-exit site, or the interaction might lead to recycling of PGAP5 between the ER and the Golgi. Interacts with F2LR1/PAR2. Interacts with KDELR2/ERD2; the interaction is disrupted by KDELR2 ligand. Found in a complex composed at least of SURF4, TMED2 and TMED10. Associates with the presenilin-dependent gamma-secretase complex. Interacts with STX17; the interaction is direct. Interacts with IL-1; the interaction is direct. Interacts with RAB21 (active GTP-bound form); the interaction is indirect and regulates TMED10 abundance and localization at the Golgi.

The protein localises to the endoplasmic reticulum membrane. Its subcellular location is the endoplasmic reticulum-Golgi intermediate compartment membrane. The protein resides in the golgi apparatus membrane. It is found in the golgi apparatus. It localises to the cis-Golgi network membrane. The protein localises to the trans-Golgi network membrane. Its subcellular location is the cytoplasmic vesicle. The protein resides in the secretory vesicle membrane. It is found in the cell membrane. It localises to the melanosome. In terms of biological role, cargo receptor involved in protein vesicular trafficking and quality control in the endoplasmic reticulum (ER) and Golgi. The p24 protein family is a group of transmembrane proteins that bind coat protein complex I/COPI and coat protein complex II/COPII involved in vesicular trafficking between the membranes. Acts at the lumenal side for incorporation of secretory cargo molecules into transport vesicles and involved in vesicle coat formation at the cytoplasmic side. Mainly functions in the early secretory pathway and cycles between the ER, ER-Golgi intermediate compartment (ERGIC) and Golgi, mediating cargo transport through COPI and COPII-coated vesicles. In COPII vesicle-mediated anterograde transport, involved in the transport of GPI-anchored proteins by acting together with TMED2 as their cargo receptor; the function specifically implies SEC24C and SEC24D of the COPII vesicle coat and lipid raft-like microdomains of the ER. Recognizes GPI anchors structural remodeled in the ER by the GPI inositol-deacylase/PGAP1 and the metallophosphoesterase MPPE1/PGAP5. In COPI vesicle-mediated retrograde transport, involved in the biogenesis of COPI vesicles and vesicle coat recruitment. Involved in trafficking of amyloid beta A4 protein and soluble APP-beta release (independent from the modulation of gamma-secretase activity). Involved in the KDELR2-mediated retrograde transport of the toxin A subunit (CTX-A-K63)together with COPI and the COOH terminus of KDELR2. On Golgi membranes, acts as a primary receptor for ARF1-GDP, a GTP-binding protein involved in COPI-vesicle formation. Increases coatomer-dependent GTPase-activating activity of ARFGAP2 which mediates the hydrolysis of ARF1-bound GTP and therefore modulates protein trafficking from the Golgi apparatus. Involved in the exocytic trafficking of G protein-coupled receptors F2LR1/PAR2 (trypsin and tryspin-like enzyme receptor), OPRM1 (opioid receptor) and P2RY4 (UTD and UDP receptor) from the Golgi to the plasma membrane, thus contributing to receptor resensitization. In addition to its cargo receptor activity, may also act as a protein channel after oligomerization, facilitating the post-translational entry of leaderless cytoplasmic cargo into the ERGIC. Involved in the translocation into ERGIC, the vesicle entry and the secretion of leaderless cargos (lacking the secretion signal sequence), including the mature form of interleukin 1/IL-1 family members, the alpha-crystallin B chain HSPB5, the carbohydrate-binding proteins galectin-1/LGALS1 and galectin-3/LGALS3, the microtubule-associated protein Tau/MAPT, and the annexin A1/ANXA1; the translocation process is dependent on cargo protein unfolding and enhanced by chaperones HSP90AB1 and HSP90B1/GRP9. Could also associates with the presenilin-dependent gamma-secretase complex in order to regulate gamma-cleavages of the amyloid beta A4 protein to yield amyloid-beta 40/Abeta40. The chain is Transmembrane emp24 domain-containing protein 10 (TMED10) from Mesocricetus auratus (Golden hamster).